The following is a 118-amino-acid chain: uncharacterized protein (118 aa).

3 consecutive transmembrane segments (helical) span residues 6-26, 43-63, and 84-104; these read ILIL…PFMV, ALSC…IHVL, and IFKV…VLVQ.

Belongs to the AzlD/HI_1737/HP1330 family.

The protein resides in the cell membrane. This is an uncharacterized protein from Helicobacter pylori (strain J99 / ATCC 700824) (Campylobacter pylori J99).